Reading from the N-terminus, the 402-residue chain is Large ribosomal subunit protein uL3 (402 aa).

The interval 1–35 is disordered; the sequence is MSHRKFSAPRHGSMGFTPKKRSKRHRGKVKAFPKD. The span at 18 to 31 shows a compositional bias: basic residues; that stretch reads PKKRSKRHRGKVKA.

It belongs to the universal ribosomal protein uL3 family.

Its subcellular location is the cytoplasm. The L3 protein is a component of the large subunit of cytoplasmic ribosomes. This Toxocara canis (Canine roundworm) protein is Large ribosomal subunit protein uL3 (RPL3).